The following is a 370-amino-acid chain: Flagellar P-ring protein (370 aa).

The signal sequence occupies residues 1–27; the sequence is MPARPIPVPLLALALAAALAVPSPAAA.

Belongs to the FlgI family. In terms of assembly, the basal body constitutes a major portion of the flagellar organelle and consists of four rings (L,P,S, and M) mounted on a central rod.

The protein localises to the periplasm. It localises to the bacterial flagellum basal body. Its function is as follows. Assembles around the rod to form the L-ring and probably protects the motor/basal body from shearing forces during rotation. The polypeptide is Flagellar P-ring protein (Anaeromyxobacter sp. (strain K)).